The chain runs to 350 residues: Kelch domain-containing protein 9 (350 aa).

3 Kelch repeats span residues 39–89 (RFYL…LVGG), 91–137 (WLCV…SHTC), and 325–350 (QLYL…EFFI).

As to quaternary structure, interacts with CCNA1.

The chain is Kelch domain-containing protein 9 (Klhdc9) from Mus musculus (Mouse).